The primary structure comprises 528 residues: Probable methylmalonate-semialdehyde/malonate-semialdehyde dehydrogenase [acylating], mitochondrial (528 aa).

The N-terminal 26 residues, 1 to 26 (MLSFKFAKSASKVIGNRNFHSSSASL), are a transit peptide targeting the mitochondrion. NAD(+)-binding residues include phenylalanine 175, lysine 199, glutamate 202, and arginine 203. The Nucleophile role is filled by cysteine 307. Glutamate 408 lines the NAD(+) pocket.

It belongs to the aldehyde dehydrogenase family. As to quaternary structure, homotetramer.

It is found in the mitochondrion. The catalysed reaction is 2-methyl-3-oxopropanoate + NAD(+) + CoA + H2O = propanoyl-CoA + hydrogencarbonate + NADH + H(+). It catalyses the reaction 3-oxopropanoate + NAD(+) + CoA + H2O = hydrogencarbonate + acetyl-CoA + NADH + H(+). In terms of biological role, probable malonate and methylmalonate semialdehyde dehydrogenase involved in the catabolism of valine, thymine, and compounds catabolized by way of beta-alanine, including uracil and cytidine. In Dictyostelium discoideum (Social amoeba), this protein is Probable methylmalonate-semialdehyde/malonate-semialdehyde dehydrogenase [acylating], mitochondrial (mmsdh).